The sequence spans 411 residues: Serpin A3-1 (411 aa).

Residues 1 to 24 (MRAERTSFLLALGLLVAGIRSVHC) form the signal peptide. Asn-100, Asn-180, Asn-230, and Asn-264 each carry an N-linked (GlcNAc...) asparagine glycan.

This sequence belongs to the serpin family. As to quaternary structure, homodimer. Post-translationally, N-glycosylated. Detected in all tissues examined (at protein level). Abundantly expressed in liver, kidney and spleen. Lowest levels were observed in diaphragm muscle.

The protein localises to the cytoplasmic vesicle. It is found in the secretory vesicle. It localises to the chromaffin granule. Its subcellular location is the secreted. Functionally, potent inhibitor of the serine proteases elastase and trypsin. Moderately inhibits the serine proteases plasmin and chymotrypsin, and the thiol protease proenkephalin-processing enzyme. Does not inhibit the serine proteases cathepsin G, furin, kallikrein, thrombin, tissue plasminogen activator and urokinase, or the cysteine proteases cathepsin B, cathepsin L and papain. The polypeptide is Serpin A3-1 (Bos taurus (Bovine)).